Reading from the N-terminus, the 321-residue chain is uncharacterized protein (321 aa).

The region spanning 1-58 is the HTH lysR-type domain; that stretch reads MTPAQLRAYSAVVRLGSVRAAAAELGLSDAGVSMHVAALRKELDDPLFTRTGAGLAFT. A DNA-binding region (H-T-H motif) is located at residues 18–37; sequence VRAAAAELGLSDAGVSMHVA.

The protein belongs to the LysR transcriptional regulatory family.

This is an uncharacterized protein from Mycobacterium tuberculosis (strain CDC 1551 / Oshkosh).